The chain runs to 714 residues: Fatty acid oxidation complex subunit alpha (714 aa).

The tract at residues 1–190 is enoyl-CoA hydratase; sequence MEMASVFTLN…KLGLVDDVVP (190 aa). Residues 306–714 form a 3-hydroxyacyl-CoA dehydrogenase region; it reads APLNSVGILG…FWKTTATDLQ (409 aa).

It in the N-terminal section; belongs to the enoyl-CoA hydratase/isomerase family. The protein in the central section; belongs to the 3-hydroxyacyl-CoA dehydrogenase family. Heterotetramer of two alpha chains (FadJ) and two beta chains (FadI).

The protein resides in the cytoplasm. The catalysed reaction is a (3S)-3-hydroxyacyl-CoA = a (2E)-enoyl-CoA + H2O. The enzyme catalyses a 4-saturated-(3S)-3-hydroxyacyl-CoA = a (3E)-enoyl-CoA + H2O. It carries out the reaction a (3S)-3-hydroxyacyl-CoA + NAD(+) = a 3-oxoacyl-CoA + NADH + H(+). It catalyses the reaction (3S)-3-hydroxybutanoyl-CoA = (3R)-3-hydroxybutanoyl-CoA. It participates in lipid metabolism; fatty acid beta-oxidation. Functionally, catalyzes the formation of a hydroxyacyl-CoA by addition of water on enoyl-CoA. Also exhibits 3-hydroxyacyl-CoA epimerase and 3-hydroxyacyl-CoA dehydrogenase activities. The polypeptide is Fatty acid oxidation complex subunit alpha (Escherichia coli O139:H28 (strain E24377A / ETEC)).